The following is a 292-amino-acid chain: Zinc metalloproteinase nas-3 (292 aa).

The signal sequence occupies residues 1–16; the sequence is MYRFIIFFSLLALTAS. One can recognise a Peptidase M12A domain in the interval 56-249; sequence RGIAIHPWQW…RNINTLYKCN (194 aa). Intrachain disulfides connect Cys-103–Cys-248 and Cys-128–Cys-158. His-169 serves as a coordination point for Zn(2+). Residue Glu-170 is part of the active site. Residues His-173 and His-179 each coordinate Zn(2+).

It depends on Zn(2+) as a cofactor.

The protein localises to the secreted. Metalloprotease. This chain is Zinc metalloproteinase nas-3 (nas-3), found in Caenorhabditis elegans.